Consider the following 308-residue polypeptide: Quinolinate synthase (308 aa).

2 residues coordinate iminosuccinate: H24 and S41. C86 is a [4Fe-4S] cluster binding site. Iminosuccinate is bound by residues 112 to 114 (YIN) and S129. Position 172 (C172) interacts with [4Fe-4S] cluster. Iminosuccinate contacts are provided by residues 198–200 (HPE) and T215. Residue C265 coordinates [4Fe-4S] cluster.

It belongs to the quinolinate synthase family. Type 2 subfamily. Requires [4Fe-4S] cluster as cofactor.

The protein resides in the cytoplasm. It catalyses the reaction iminosuccinate + dihydroxyacetone phosphate = quinolinate + phosphate + 2 H2O + H(+). The protein operates within cofactor biosynthesis; NAD(+) biosynthesis; quinolinate from iminoaspartate: step 1/1. Catalyzes the condensation of iminoaspartate with dihydroxyacetone phosphate to form quinolinate. In Sulfurihydrogenibium sp. (strain YO3AOP1), this protein is Quinolinate synthase.